Here is a 256-residue protein sequence, read N- to C-terminus: 1-(5-phosphoribosyl)-5-[(5-phosphoribosylamino)methylideneamino] imidazole-4-carboxamide isomerase (256 aa).

D8 serves as the catalytic Proton acceptor. D129 acts as the Proton donor in catalysis.

Belongs to the HisA/HisF family.

Its subcellular location is the cytoplasm. The catalysed reaction is 1-(5-phospho-beta-D-ribosyl)-5-[(5-phospho-beta-D-ribosylamino)methylideneamino]imidazole-4-carboxamide = 5-[(5-phospho-1-deoxy-D-ribulos-1-ylimino)methylamino]-1-(5-phospho-beta-D-ribosyl)imidazole-4-carboxamide. It functions in the pathway amino-acid biosynthesis; L-histidine biosynthesis; L-histidine from 5-phospho-alpha-D-ribose 1-diphosphate: step 4/9. This is 1-(5-phosphoribosyl)-5-[(5-phosphoribosylamino)methylideneamino] imidazole-4-carboxamide isomerase from Synechococcus sp. (strain WH7803).